Reading from the N-terminus, the 261-residue chain is Cytochrome c oxidase subunit 3 (261 aa).

The Mitochondrial matrix portion of the chain corresponds to 1–15 (MTHQTHAYHMVNPSP). The chain crosses the membrane as a helical span at residues 16 to 34 (WPLTGALSALLMTSGLAMW). Residues 35–40 (FHFNSV) lie on the Mitochondrial intermembrane side of the membrane. The chain crosses the membrane as a helical span at residues 41–66 (TLLTLGLTTNMLTMYQWWRDIIREST). Residues 67 to 72 (FQGHHT) are Mitochondrial matrix-facing. Residues 73-105 (PTVQKGLRYGMILFIISEVLFFTGFFWAFYHSS) traverse the membrane as a helical segment. Residues 106 to 128 (LAPTPELGGCWPPTGISPLNPLE) are Mitochondrial intermembrane-facing. The helical transmembrane segment at 129-152 (VPLLNTSVLLASGVSITWAHHSLM) threads the bilayer. At 153 to 155 (EGN) the chain is on the mitochondrial matrix side. A helical membrane pass occupies residues 156-183 (RNHMLQALFITIALGVYFTLLQASEYYE). Over 184-190 (APFTISD) the chain is Mitochondrial intermembrane. The helical transmembrane segment at 191–223 (GIYGSTFFVATGFHGLHVIIGSTFLIVCFFRQL) threads the bilayer. Residues 224–232 (KFHFTSNHH) are Mitochondrial matrix-facing. A helical transmembrane segment spans residues 233 to 256 (FGFEAAAWYWHFVDVVWLFLYVSI). Topologically, residues 257–261 (YWWGS) are mitochondrial intermembrane.

This sequence belongs to the cytochrome c oxidase subunit 3 family. Component of the cytochrome c oxidase (complex IV, CIV), a multisubunit enzyme composed of 14 subunits. The complex is composed of a catalytic core of 3 subunits MT-CO1, MT-CO2 and MT-CO3, encoded in the mitochondrial DNA, and 11 supernumerary subunits COX4I, COX5A, COX5B, COX6A, COX6B, COX6C, COX7A, COX7B, COX7C, COX8 and NDUFA4, which are encoded in the nuclear genome. The complex exists as a monomer or a dimer and forms supercomplexes (SCs) in the inner mitochondrial membrane with NADH-ubiquinone oxidoreductase (complex I, CI) and ubiquinol-cytochrome c oxidoreductase (cytochrome b-c1 complex, complex III, CIII), resulting in different assemblies (supercomplex SCI(1)III(2)IV(1) and megacomplex MCI(2)III(2)IV(2)).

It localises to the mitochondrion inner membrane. It carries out the reaction 4 Fe(II)-[cytochrome c] + O2 + 8 H(+)(in) = 4 Fe(III)-[cytochrome c] + 2 H2O + 4 H(+)(out). In terms of biological role, component of the cytochrome c oxidase, the last enzyme in the mitochondrial electron transport chain which drives oxidative phosphorylation. The respiratory chain contains 3 multisubunit complexes succinate dehydrogenase (complex II, CII), ubiquinol-cytochrome c oxidoreductase (cytochrome b-c1 complex, complex III, CIII) and cytochrome c oxidase (complex IV, CIV), that cooperate to transfer electrons derived from NADH and succinate to molecular oxygen, creating an electrochemical gradient over the inner membrane that drives transmembrane transport and the ATP synthase. Cytochrome c oxidase is the component of the respiratory chain that catalyzes the reduction of oxygen to water. Electrons originating from reduced cytochrome c in the intermembrane space (IMS) are transferred via the dinuclear copper A center (CU(A)) of subunit 2 and heme A of subunit 1 to the active site in subunit 1, a binuclear center (BNC) formed by heme A3 and copper B (CU(B)). The BNC reduces molecular oxygen to 2 water molecules using 4 electrons from cytochrome c in the IMS and 4 protons from the mitochondrial matrix. This is Cytochrome c oxidase subunit 3 (MT-CO3) from Neotragus moschatus (Suni).